Consider the following 276-residue polypeptide: Cholesterol 25-hydroxylase-like protein 1, member 2 (276 aa).

Asn-30 carries an N-linked (GlcNAc...) asparagine glycan. The next 3 helical transmembrane spans lie at 39–59, 90–110, and 126–146; these read LFPV…YLSC, GVTL…QWMW, and LVGG…IWHF. One can recognise a Fatty acid hydroxylase domain in the interval 134–265; that stretch reads LLLFDLQYFI…FSHWDKMFGT (132 aa). Residues 144-148 carry the Histidine box-1 motif; the sequence is WHFLH. Positions 159 to 163 match the Histidine box-2 motif; that stretch reads HAIHH. Residue Asn-164 is glycosylated (N-linked (GlcNAc...) asparagine). The next 2 helical transmembrane spans lie at 175–195 and 199–219; these read CLGG…PVLL and LLTT…DHCG. A Histidine box-3 motif is present at residues 240–246; it reads KHDVHHQ.

This sequence belongs to the sterol desaturase family. It depends on Fe cation as a cofactor.

The protein localises to the endoplasmic reticulum membrane. Functionally, may catalyze the formation of 25-hydroxycholesterol from cholesterol. The protein is Cholesterol 25-hydroxylase-like protein 1, member 2 of Danio rerio (Zebrafish).